The primary structure comprises 530 residues: Glutamate--cysteine ligase (530 aa).

The protein belongs to the glutamate--cysteine ligase type 1 family. Type 1 subfamily.

It catalyses the reaction L-cysteine + L-glutamate + ATP = gamma-L-glutamyl-L-cysteine + ADP + phosphate + H(+). It functions in the pathway sulfur metabolism; glutathione biosynthesis; glutathione from L-cysteine and L-glutamate: step 1/2. This chain is Glutamate--cysteine ligase, found in Azotobacter vinelandii (strain DJ / ATCC BAA-1303).